The sequence spans 284 residues: Flavin-dependent thymidylate synthase (284 aa).

Residues Gly27–Tyr237 form the ThyX domain. FAD contacts are provided by residues Thr73, Arg96–Arg98, and Glu104. Residues Gln93–Arg96 and Glu104–Arg108 contribute to the dUMP site. The ThyX motif motif lies at Arg96 to Ser106. The interval Glu122–Asp142 is disordered. Residues Ala125–Gly134 show a composition bias toward polar residues. Arg176 is a dUMP binding site. FAD contacts are provided by residues Asp192–His194 and His198. Arg203 provides a ligand contact to dUMP. Arg203 functions as the Involved in ionization of N3 of dUMP, leading to its activation in the catalytic mechanism.

Belongs to the thymidylate synthase ThyX family. Homotetramer. FAD is required as a cofactor.

It carries out the reaction dUMP + (6R)-5,10-methylene-5,6,7,8-tetrahydrofolate + NADPH + H(+) = dTMP + (6S)-5,6,7,8-tetrahydrofolate + NADP(+). It functions in the pathway pyrimidine metabolism; dTTP biosynthesis. Its function is as follows. Catalyzes the reductive methylation of 2'-deoxyuridine-5'-monophosphate (dUMP) to 2'-deoxythymidine-5'-monophosphate (dTMP) while utilizing 5,10-methylenetetrahydrofolate (mTHF) as the methyl donor, and NADPH and FADH(2) as the reductant. This is Flavin-dependent thymidylate synthase from Wolbachia pipientis wMel.